The following is a 488-amino-acid chain: GTPase Der (488 aa).

EngA-type G domains are found at residues P3 to M166 and I199 to T372. GTP is bound by residues G9–S16, D56–I60, N118–D121, G205–S212, D252–V256, and N317–D320. The KH-like domain maps to R373–D457. Residues M469–K488 form a disordered region. Residues R473–K488 are compositionally biased toward basic residues.

Belongs to the TRAFAC class TrmE-Era-EngA-EngB-Septin-like GTPase superfamily. EngA (Der) GTPase family. Associates with the 50S ribosomal subunit.

Functionally, GTPase that plays an essential role in the late steps of ribosome biogenesis. This Shewanella sp. (strain W3-18-1) protein is GTPase Der.